The primary structure comprises 283 residues: S-adenosylmethionine mitochondrial carrier protein homolog (283 aa).

3 Solcar repeats span residues 11-84, 93-178, and 187-275; these read LKFF…GKQF, DSPY…FKLQ, and STPF…TTRI. 6 helical membrane passes run 14-34, 55-75, 99-119, 152-172, 190-210, and 248-268; these read FHALVAGGVAGMVVDIALFPI, GIYKGLAPAAAGSAPTAALFF, MAAASAAEVLACLIRVPVEIA, RGFGSTIMREIPFSLIQFPLW, FSVALCGAVAGGISAGLTTPL, and FAGFVPRVLWITLGGAFFFGF.

It belongs to the mitochondrial carrier (TC 2.A.29) family.

Its subcellular location is the mitochondrion inner membrane. In terms of biological role, mitochondrial solute carriers shuttle metabolites, nucleotides, and cofactors through the mitochondrial inner membrane. May mediate the transport of S-adenosylmethionine (SAM) into the mitochondria. This is S-adenosylmethionine mitochondrial carrier protein homolog from Drosophila melanogaster (Fruit fly).